We begin with the raw amino-acid sequence, 409 residues long: MMKKNNSAKRGPQDGNQQPAPPEKVGWVRKFCGKGIFREIWKNRYVVLKGDQLYISEKEVKDEKNIQEVFDLSDYEKCEELRKSKSRSKKNHSKFTLAHSKQPGNTAPNLIFLAVSPEEKESWINALNSAITRAKNRILDEVTVEEDSYLAHPTRDRAKIQHSRRPPTRGHLMAVASTSTSDGMLTLDLIQEEDPSPEEPTSCAESFRVDLDKSVAQLAGSRRRADSDRIQPSADRASSLSRPWEKTDKGATYTPQAPKKLTPTEKGRCASLEEILSQRDAASARTLQLRAEEPPTPALPNPGQLSRIQDLVARKLEETQELLAEVQGLGDGKRKAKDPPRSPPDSESEQLLLETERLLGEASSNWSQAKRVLQEVRELRDLYRQMDLQTPDSHLRQTTPHSQYRKSLM.

The interval 1–24 (MMKKNNSAKRGPQDGNQQPAPPEK) is disordered. The PH domain maps to 21–132 (PPEKVGWVRK…WINALNSAIT (112 aa)). An interaction with capping proteins (CPs) region spans residues 133–193 (RAKNRILDEV…MLTLDLIQEE (61 aa)). The tract at residues 136 to 308 (NRILDEVTVE…LPNPGQLSRI (173 aa)) is interaction with ATM, CKIP, IFP35 and NMI. The segment at 218 to 267 (LAGSRRRADSDRIQPSADRASSLSRPWEKTDKGATYTPQAPKKLTPTEKG) is disordered. Phosphoserine is present on residues Ser-227 and Ser-271. Residues 308–409 (IQDLVARKLE…PHSQYRKSLM (102 aa)) form a negative regulator of AP-1 activity region. Disordered stretches follow at residues 325-350 (EVQGLGDGKRKAKDPPRSPPDSESEQ) and 390-409 (TPDSHLRQTTPHSQYRKSLM). Over residues 331–340 (DGKRKAKDPP) the composition is skewed to basic and acidic residues. The residue at position 342 (Ser-342) is a Phosphoserine. A compositionally biased stretch (polar residues) spans 390-402 (TPDSHLRQTTPHS).

Heterodimer or homodimer. Interacts with CK2 and actin capping subunits (capping protein CP-alpha and CP-beta). CKIP1 and CK2 together inhibit the activity of actin capping protein at the barbed ends of actin filaments. Interacts with ATM, IFP35, JUN, JUND, NMI and PI3K. Interacts with AKT1, AKT2 and AKT3 (each isozyme of PKB), PtdIns(3,5)P2, PtdIns(4,5)P2 and PtdIns(3,4,5)P2. C-terminal fragments could be released during apoptosis via caspase-3-dependent cleavage. As to expression, abundantly expressed in skeletal muscle and heart, moderately in kidney, liver, brain and placenta and sparingly in the pancreas and lung. Easily detectable in cell lines such as MOLT-4, HEK293 and Jurkat.

The protein resides in the cell membrane. The protein localises to the nucleus. It localises to the cytoplasm. In terms of biological role, plays a role in the regulation of the actin cytoskeleton through its interactions with actin capping protein (CP). May function to target CK2 to the plasma membrane thereby serving as an adapter to facilitate the phosphorylation of CP by protein kinase 2 (CK2). Appears to target ATM to the plasma membrane. Appears to also inhibit tumor cell growth by inhibiting AKT-mediated cell-survival. Also implicated in PI3K-regulated muscle differentiation, the regulation of AP-1 activity (plasma membrane bound AP-1 regulator that translocates to the nucleus) and the promotion of apoptosis induced by tumor necrosis factor TNF. When bound to PKB, it inhibits it probably by decreasing PKB level of phosphorylation. The protein is Pleckstrin homology domain-containing family O member 1 (PLEKHO1) of Homo sapiens (Human).